The sequence spans 167 residues: Antibacterial peptide PMAP-37 (167 aa).

The signal sequence occupies residues 1–29; that stretch reads METQRASLCLGRWSLWLLLLALVVPSASA. The propeptide occupies 30-130; it reads QALSYREAVL…DITCNEIQSV (101 aa). 2 disulfides stabilise this stretch: C85–C96 and C107–C124.

This sequence belongs to the cathelicidin family.

The protein resides in the secreted. Functionally, exerts antimicrobial activity against both Gram-positive and negative bacteria with minimal inhibitory concentrations ranging over 1-4 micro molar. Its activity appears to be mediated by its ability to damage bacterial membranes. This Sus scrofa (Pig) protein is Antibacterial peptide PMAP-37 (PMAP37).